A 362-amino-acid chain; its full sequence is tRNA-specific 2-thiouridylase MnmA (362 aa).

Residues 9 to 16 (GMSGGVDS) and Met-35 contribute to the ATP site. The tract at residues 95–97 (NPD) is interaction with target base in tRNA. Cys-100 acts as the Nucleophile in catalysis. Cysteines 100 and 197 form a disulfide. Gly-124 contributes to the ATP binding site. The interval 147–149 (KDQ) is interaction with tRNA. The Cysteine persulfide intermediate role is filled by Cys-197. Residues 309–310 (RY) form an interaction with tRNA region.

Belongs to the MnmA/TRMU family.

It localises to the cytoplasm. The enzyme catalyses S-sulfanyl-L-cysteinyl-[protein] + uridine(34) in tRNA + AH2 + ATP = 2-thiouridine(34) in tRNA + L-cysteinyl-[protein] + A + AMP + diphosphate + H(+). In terms of biological role, catalyzes the 2-thiolation of uridine at the wobble position (U34) of tRNA, leading to the formation of s(2)U34. This Cupriavidus pinatubonensis (strain JMP 134 / LMG 1197) (Cupriavidus necator (strain JMP 134)) protein is tRNA-specific 2-thiouridylase MnmA.